A 273-amino-acid polypeptide reads, in one-letter code: Large ribosomal subunit protein uL2cz/uL2cy (273 aa).

2 disordered regions span residues 1–20 (MAKHLYKTPIPSTRKGTIDR) and 225–273 (PVDH…RRRK).

The protein belongs to the universal ribosomal protein uL2 family. Part of the 50S ribosomal subunit.

The protein localises to the plastid. It is found in the chloroplast. This is Large ribosomal subunit protein uL2cz/uL2cy (rpl2-A) from Oryza nivara (Indian wild rice).